Reading from the N-terminus, the 337-residue chain is F420-dependent glucose-6-phosphate dehydrogenase (337 aa).

Asp-44 is a binding site for coenzyme F420-(gamma-Glu)n. The active-site Proton donor is the His-45. Coenzyme F420-(gamma-Glu)n-binding positions include Thr-81 and 112 to 113 (TG). Glu-114 acts as the Proton acceptor in catalysis. Coenzyme F420-(gamma-Glu)n contacts are provided by residues Asn-117, 180 to 181 (GG), and 183 to 184 (GV). Residues Thr-198, Lys-201, Lys-262, and Arg-286 each contribute to the substrate site.

Belongs to the F420-dependent glucose-6-phosphate dehydrogenase family. In terms of assembly, homodimer.

It catalyses the reaction oxidized coenzyme F420-(gamma-L-Glu)(n) + D-glucose 6-phosphate + H(+) = 6-phospho-D-glucono-1,5-lactone + reduced coenzyme F420-(gamma-L-Glu)(n). In terms of biological role, catalyzes the coenzyme F420-dependent oxidation of glucose 6-phosphate (G6P) to 6-phosphogluconolactone. This chain is F420-dependent glucose-6-phosphate dehydrogenase, found in Kineococcus radiotolerans (strain ATCC BAA-149 / DSM 14245 / SRS30216).